We begin with the raw amino-acid sequence, 92 residues long: Co-chaperonin GroES (92 aa).

The protein belongs to the GroES chaperonin family. In terms of assembly, heptamer of 7 subunits arranged in a ring. Interacts with the chaperonin GroEL.

The protein localises to the cytoplasm. Functionally, together with the chaperonin GroEL, plays an essential role in assisting protein folding. The GroEL-GroES system forms a nano-cage that allows encapsulation of the non-native substrate proteins and provides a physical environment optimized to promote and accelerate protein folding. GroES binds to the apical surface of the GroEL ring, thereby capping the opening of the GroEL channel. The sequence is that of Co-chaperonin GroES from Thermotoga neapolitana.